The chain runs to 716 residues: Mitogen-activated protein kinase kinase kinase 5 (716 aa).

Over residues 1–27 (MRWLPQISFSSPSSSPSSSLKPVASYS) the composition is skewed to low complexity. 4 disordered regions span residues 1 to 42 (MRWL…DRFH), 74 to 98 (ASTS…VPRS), 119 to 180 (AANA…YWVN), and 238 to 302 (YDIT…VTNG). The segment covering 31–40 (DPDRNQDRDR) has biased composition (basic and acidic residues). The segment covering 75–91 (STSSSTFDSGLTRSPSA) has biased composition (polar residues). Over residues 124–137 (GLDDRDRDPERLIS) the composition is skewed to basic and acidic residues. 3 stretches are compositionally biased toward polar residues: residues 138 to 150 (DRTS…TSVN), 162 to 173 (ENSSYQDFSPRN), and 242 to 251 (AFSTDNSPIH). Positions 263–273 (RSPQPSRPSSP) are enriched in low complexity. Residues 346–607 (WKKGKLIGRG…ASMLLEHRFL (262 aa)) enclose the Protein kinase domain. ATP is bound by residues 352–360 (IGRGTFGSV) and Lys-375. Asp-472 serves as the catalytic Proton acceptor. A compositionally biased stretch (polar residues) spans 610 to 633 (SLQPTSPSNSDVSQLFNGMNITEP). Residues 610–716 (SLQPTSPSNS…RRTGVTSDHL (107 aa)) form a disordered region. Ser-617 and Ser-622 each carry phosphoserine; by PBL27. Positions 634–648 (SSRREKPNFKLDQVP) are enriched in basic and acidic residues. Composition is skewed to polar residues over residues 652–661 (NMTSSESESG) and 674–685 (LTGTVNRLSPRS). Ser-658 and Ser-660 each carry phosphoserine; by PBL27. Thr-677 carries the phosphothreonine; by PBL27 modification. Ser-685 carries the post-translational modification Phosphoserine; by PBL27. Residues 703-716 (SSDRRRTGVTSDHL) show a composition bias toward basic and acidic residues.

It belongs to the protein kinase superfamily. STE Ser/Thr protein kinase family. MAP kinase kinase kinase subfamily. In terms of assembly, interacts with PBL27 at the plasma membrane; disassociation is induced by chitin perception by the CERK1 complex. Interacts with MKK2, MKK4, and MKK5 mainly in the cytosol. Phosphorylated by PBL27 during chitin-mediated signaling in a CERK1-dependent manner. In terms of tissue distribution, mostly expressed in flower buds. Also present in pollen, roots, leaves and seedlings, and, at low levels, in stems and immature siliques.

It is found in the cell membrane. Its subcellular location is the cytoplasm. It localises to the cytosol. The catalysed reaction is L-seryl-[protein] + ATP = O-phospho-L-seryl-[protein] + ADP + H(+). It carries out the reaction L-threonyl-[protein] + ATP = O-phospho-L-threonyl-[protein] + ADP + H(+). Its function is as follows. Mitogen-activated protein kinase (MAPK) involved in the transduction of signal between the host cell surface chitin receptor complex CERK1-LYK5 and the intracellular MAPK cascade that leads to chitin-induced immunity. Phosphorylates and activates MAPK targets (e.g. MKK4, MKK5, and possibly MKK2) when phosphorylated by PBL27 after elicitation by chitin. Required for resistance to the fungus A.brassicicola. This Arabidopsis thaliana (Mouse-ear cress) protein is Mitogen-activated protein kinase kinase kinase 5.